Consider the following 313-residue polypeptide: Mitochondrial uncoupling protein 5 (313 aa).

Solcar repeat units follow at residues 4–108 (KGFA…IKGE), 117–208 (MPLM…VKET), and 217–307 (DGLG…VKKL). The next 6 helical transmembrane spans lie at 6–26 (FAEG…LDLI), 77–97 (MRAL…YSTT), 123–143 (IGAG…ADVA), 182–202 (RGSS…LASY), 223–243 (VSAS…VDVI), and 280–300 (YKGF…LFVT).

This sequence belongs to the mitochondrial carrier (TC 2.A.29) family. In terms of tissue distribution, expressed in roots, leaves, stems and flowers.

Its subcellular location is the mitochondrion inner membrane. PUMPS are mitochondrial transporter proteins that create proton leaks across the inner mitochondrial membrane, thus uncoupling oxidative phosphorylation. This leads to a decrease in the efficiency of oxidative phosphorylation and an increase in heat production. May be involved in protecting plant cells against oxidative stress damage. Recombinant PUMP5, reconstituted into liposomes, transports a wide range of dicarboxylic acids including malate, oxaloacetate and succinate as well as phosphate, sulfate and thiosulfate. However, it is unknown if these transports are of any biological significance in vivo. This Arabidopsis thaliana (Mouse-ear cress) protein is Mitochondrial uncoupling protein 5 (PUMP5).